The primary structure comprises 131 residues: Large ribosomal subunit protein bL17 (131 aa).

Belongs to the bacterial ribosomal protein bL17 family. As to quaternary structure, part of the 50S ribosomal subunit. Contacts protein L32.

The sequence is that of Large ribosomal subunit protein bL17 from Thermotoga sp. (strain RQ2).